A 236-amino-acid chain; its full sequence is MRSIQQNIEHITAQIESAQQKCGRARSSVQLLAVSKTKPVEAILEATQAGQRYFGENYVQEGVDKIRYFAEHHPQLALEWHFIGPLQSNKTRLVAEHFDWVHTIDREKIALRLSEQRPVNMPPLQVLIQVNTSGEASKSGIEPQQLFTLAELISRLPNLTLRGLMSIPENVPDYPAQLAAFTQLAELQQQLAQKYPQIDTLSMGMSGDMQAAIEAGSTIVRIGTAIFGERDYSRNA.

The residue at position 36 (lysine 36) is an N6-(pyridoxal phosphate)lysine.

This sequence belongs to the pyridoxal phosphate-binding protein YggS/PROSC family.

Functionally, pyridoxal 5'-phosphate (PLP)-binding protein, which is involved in PLP homeostasis. The sequence is that of Pyridoxal phosphate homeostasis protein from Vibrio cholerae serotype O1 (strain ATCC 39315 / El Tor Inaba N16961).